The following is a 189-amino-acid chain: Chitin synthase 2 (189 aa).

The protein belongs to the chitin synthase family. Class II subfamily.

The protein localises to the cell membrane. It catalyses the reaction [(1-&gt;4)-N-acetyl-beta-D-glucosaminyl](n) + UDP-N-acetyl-alpha-D-glucosamine = [(1-&gt;4)-N-acetyl-beta-D-glucosaminyl](n+1) + UDP + H(+). Polymerizes chitin, a structural polymer of the cell wall and septum, by transferring the sugar moiety of UDP-GlcNAc to the non-reducing end of the growing chitin polymer. This Ajellomyces dermatitidis (Blastomyces dermatitidis) protein is Chitin synthase 2 (CHS2).